A 195-amino-acid polypeptide reads, in one-letter code: Protein GrpE (195 aa).

It belongs to the GrpE family. In terms of assembly, homodimer.

It is found in the cytoplasm. Functionally, participates actively in the response to hyperosmotic and heat shock by preventing the aggregation of stress-denatured proteins, in association with DnaK and GrpE. It is the nucleotide exchange factor for DnaK and may function as a thermosensor. Unfolded proteins bind initially to DnaJ; upon interaction with the DnaJ-bound protein, DnaK hydrolyzes its bound ATP, resulting in the formation of a stable complex. GrpE releases ADP from DnaK; ATP binding to DnaK triggers the release of the substrate protein, thus completing the reaction cycle. Several rounds of ATP-dependent interactions between DnaJ, DnaK and GrpE are required for fully efficient folding. The protein is Protein GrpE of Blochmanniella floridana.